Consider the following 608-residue polypeptide: Aspartate--tRNA(Asp/Asn) ligase (608 aa).

Glu-187 contributes to the L-aspartate binding site. An aspartate region spans residues 211–214 (QQFK). L-aspartate contacts are provided by Arg-233 and His-461. 233-235 (RDE) contributes to the ATP binding site. Glu-495 lines the ATP pocket. Arg-502 contributes to the L-aspartate binding site. 547–550 (GLDR) contributes to the ATP binding site.

This sequence belongs to the class-II aminoacyl-tRNA synthetase family. Type 1 subfamily. Homodimer.

It is found in the cytoplasm. It carries out the reaction tRNA(Asx) + L-aspartate + ATP = L-aspartyl-tRNA(Asx) + AMP + diphosphate. Functionally, aspartyl-tRNA synthetase with relaxed tRNA specificity since it is able to aspartylate not only its cognate tRNA(Asp) but also tRNA(Asn). Reaction proceeds in two steps: L-aspartate is first activated by ATP to form Asp-AMP and then transferred to the acceptor end of tRNA(Asp/Asn). This chain is Aspartate--tRNA(Asp/Asn) ligase, found in Prosthecochloris aestuarii (strain DSM 271 / SK 413).